Reading from the N-terminus, the 381-residue chain is tRNA pseudouridine synthase D (381 aa).

The Nucleophile role is filled by Asp81. The region spanning 160–335 is the TRUD domain; the sequence is GMPNYFGSQR…TLGSRRFFWV (176 aa).

It belongs to the pseudouridine synthase TruD family.

The enzyme catalyses uridine(13) in tRNA = pseudouridine(13) in tRNA. Its function is as follows. Responsible for synthesis of pseudouridine from uracil-13 in transfer RNAs. The protein is tRNA pseudouridine synthase D of Helicobacter pylori (strain ATCC 700392 / 26695) (Campylobacter pylori).